We begin with the raw amino-acid sequence, 561 residues long: Potassium-transporting ATPase potassium-binding subunit (561 aa).

The next 12 helical transmembrane spans lie at 1-21 (MMAS…LLAR), 62-82 (YLLA…LILM), 132-152 (GLTV…FALM), 173-193 (ITLY…VSQG), 253-273 (FVQM…FGDV), 283-303 (LLWS…WAEV), 327-347 (FGIL…CGAV), 356-376 (ALGG…FGGV), 379-399 (GLYG…LMIG), 416-436 (MTAL…ALAM), 483-503 (MLLA…VLAI), and 526-546 (LFIA…FIPA).

Belongs to the KdpA family. In terms of assembly, the system is composed of three essential subunits: KdpA, KdpB and KdpC.

It localises to the cell inner membrane. Part of the high-affinity ATP-driven potassium transport (or Kdp) system, which catalyzes the hydrolysis of ATP coupled with the electrogenic transport of potassium into the cytoplasm. This subunit binds the periplasmic potassium ions and delivers the ions to the membrane domain of KdpB through an intramembrane tunnel. The chain is Potassium-transporting ATPase potassium-binding subunit from Erwinia tasmaniensis (strain DSM 17950 / CFBP 7177 / CIP 109463 / NCPPB 4357 / Et1/99).